A 690-amino-acid polypeptide reads, in one-letter code: Polyribonucleotide nucleotidyltransferase (690 aa).

Residues D483 and D489 each contribute to the Mg(2+) site. The KH domain maps to 550–609 (PKMEQITVDKKDIAAVIGKGGATIREIVEKSGAKLDVNDEGVVTVAAPDEESRNIAMQMI). Residues 619–686 (NKIYSGKVMK…DRGKVKLSMK (68 aa)) form the S1 motif domain.

Belongs to the polyribonucleotide nucleotidyltransferase family. It depends on Mg(2+) as a cofactor.

The protein resides in the cytoplasm. The catalysed reaction is RNA(n+1) + phosphate = RNA(n) + a ribonucleoside 5'-diphosphate. Functionally, involved in mRNA degradation. Catalyzes the phosphorolysis of single-stranded polyribonucleotides processively in the 3'- to 5'-direction. The sequence is that of Polyribonucleotide nucleotidyltransferase from Pelagibacter ubique (strain HTCC1062).